We begin with the raw amino-acid sequence, 506 residues long: Apolipoprotein N-acyltransferase (506 aa).

The next 6 helical transmembrane spans lie at 24–44 (LALA…MFYL), 58–78 (GWCY…VSIH), 85–105 (ALLA…FFAL), 125–145 (LAFA…LTGF), 162–182 (LAPV…AALL), and 192–212 (KSFL…GLAL). One can recognise a CN hydrolase domain in the interval 230–470 (MQGNIEQSMK…RGVLYGEVVP (241 aa)). The Proton acceptor role is filled by Glu269. The active site involves Lys330. Cys382 serves as the catalytic Nucleophile. Residues 482–502 (SWPLAIVCLLLFGWALLAARI) form a helical membrane-spanning segment.

The protein belongs to the CN hydrolase family. Apolipoprotein N-acyltransferase subfamily.

It localises to the cell inner membrane. It carries out the reaction N-terminal S-1,2-diacyl-sn-glyceryl-L-cysteinyl-[lipoprotein] + a glycerophospholipid = N-acyl-S-1,2-diacyl-sn-glyceryl-L-cysteinyl-[lipoprotein] + a 2-acyl-sn-glycero-3-phospholipid + H(+). It participates in protein modification; lipoprotein biosynthesis (N-acyl transfer). Its function is as follows. Catalyzes the phospholipid dependent N-acylation of the N-terminal cysteine of apolipoprotein, the last step in lipoprotein maturation. The sequence is that of Apolipoprotein N-acyltransferase from Pseudomonas syringae pv. tomato (strain ATCC BAA-871 / DC3000).